The sequence spans 166 residues: Large ribosomal subunit protein bL9 (166 aa).

The protein belongs to the bacterial ribosomal protein bL9 family.

In terms of biological role, binds to the 23S rRNA. This Psychrobacter arcticus (strain DSM 17307 / VKM B-2377 / 273-4) protein is Large ribosomal subunit protein bL9.